The sequence spans 379 residues: Adenylosuccinate synthetase (379 aa).

GTP-binding positions include 11-17 (GDEGKGK) and 39-41 (GHT). The Proton acceptor role is filled by aspartate 12. Mg(2+) contacts are provided by aspartate 12 and glycine 39. Residues 12–15 (DEGK), 37–40 (NAGH), threonine 127, arginine 141, glutamine 223, threonine 238, and arginine 302 each bind IMP. Residue histidine 40 is the Proton donor of the active site. Position 298-304 (298-304 (TTTGRGR)) interacts with substrate. GTP-binding positions include arginine 304 and 330–332 (KLD).

Belongs to the adenylosuccinate synthetase family. Homodimer. Mg(2+) is required as a cofactor.

Its subcellular location is the cytoplasm. The catalysed reaction is IMP + L-aspartate + GTP = N(6)-(1,2-dicarboxyethyl)-AMP + GDP + phosphate + 2 H(+). The protein operates within purine metabolism; AMP biosynthesis via de novo pathway; AMP from IMP: step 1/2. Functionally, plays an important role in the de novo pathway of purine nucleotide biosynthesis. Catalyzes the first committed step in the biosynthesis of AMP from IMP. This Methanosarcina mazei (strain ATCC BAA-159 / DSM 3647 / Goe1 / Go1 / JCM 11833 / OCM 88) (Methanosarcina frisia) protein is Adenylosuccinate synthetase.